The following is a 580-amino-acid chain: Proline--tRNA ligase (580 aa).

It belongs to the class-II aminoacyl-tRNA synthetase family. ProS type 1 subfamily. Homodimer.

The protein resides in the cytoplasm. It catalyses the reaction tRNA(Pro) + L-proline + ATP = L-prolyl-tRNA(Pro) + AMP + diphosphate. Functionally, catalyzes the attachment of proline to tRNA(Pro) in a two-step reaction: proline is first activated by ATP to form Pro-AMP and then transferred to the acceptor end of tRNA(Pro). As ProRS can inadvertently accommodate and process non-cognate amino acids such as alanine and cysteine, to avoid such errors it has two additional distinct editing activities against alanine. One activity is designated as 'pretransfer' editing and involves the tRNA(Pro)-independent hydrolysis of activated Ala-AMP. The other activity is designated 'posttransfer' editing and involves deacylation of mischarged Ala-tRNA(Pro). The misacylated Cys-tRNA(Pro) is not edited by ProRS. This Mycobacteroides abscessus (strain ATCC 19977 / DSM 44196 / CCUG 20993 / CIP 104536 / JCM 13569 / NCTC 13031 / TMC 1543 / L948) (Mycobacterium abscessus) protein is Proline--tRNA ligase.